The following is a 475-amino-acid chain: UDP-N-acetylmuramate--L-alanine ligase (475 aa).

Residue 114–120 (GTHGKTT) participates in ATP binding.

It belongs to the MurCDEF family.

The protein resides in the cytoplasm. The enzyme catalyses UDP-N-acetyl-alpha-D-muramate + L-alanine + ATP = UDP-N-acetyl-alpha-D-muramoyl-L-alanine + ADP + phosphate + H(+). It participates in cell wall biogenesis; peptidoglycan biosynthesis. Functionally, cell wall formation. The polypeptide is UDP-N-acetylmuramate--L-alanine ligase (Bartonella quintana (strain Toulouse) (Rochalimaea quintana)).